The chain runs to 67 residues: DNA-directed RNA polymerase subunit omega (67 aa).

It belongs to the RNA polymerase subunit omega family. In terms of assembly, the RNAP catalytic core consists of 2 alpha, 1 beta, 1 beta' and 1 omega subunit. When a sigma factor is associated with the core the holoenzyme is formed, which can initiate transcription.

The enzyme catalyses RNA(n) + a ribonucleoside 5'-triphosphate = RNA(n+1) + diphosphate. In terms of biological role, promotes RNA polymerase assembly. Latches the N- and C-terminal regions of the beta' subunit thereby facilitating its interaction with the beta and alpha subunits. The sequence is that of DNA-directed RNA polymerase subunit omega from Listeria welshimeri serovar 6b (strain ATCC 35897 / DSM 20650 / CCUG 15529 / CIP 8149 / NCTC 11857 / SLCC 5334 / V8).